A 70-amino-acid polypeptide reads, in one-letter code: Large ribosomal subunit protein uL29 (70 aa).

It belongs to the universal ribosomal protein uL29 family.

The protein is Large ribosomal subunit protein uL29 of Symbiobacterium thermophilum (strain DSM 24528 / JCM 14929 / IAM 14863 / T).